A 407-amino-acid polypeptide reads, in one-letter code: Tryptophan 2,3-dioxygenase B (407 aa).

Substrate is bound by residues 71 to 75 (FIVTH) and Arg143. Residue His327 participates in heme binding. Thr341 provides a ligand contact to substrate.

It belongs to the tryptophan 2,3-dioxygenase family. As to quaternary structure, homotetramer. Dimer of dimers. Requires heme as cofactor.

The enzyme catalyses L-tryptophan + O2 = N-formyl-L-kynurenine. It participates in amino-acid degradation; L-tryptophan degradation via kynurenine pathway; L-kynurenine from L-tryptophan: step 1/2. Heme-dependent dioxygenase that catalyzes the oxidative cleavage of the L-tryptophan (L-Trp) pyrrole ring and converts L-tryptophan to N-formyl-L-kynurenine. Catalyzes the oxidative cleavage of the indole moiety. The sequence is that of Tryptophan 2,3-dioxygenase B from Danio rerio (Zebrafish).